The primary structure comprises 68 residues: MAFLKKSLFLVLFLGLVSLSIGEEEKREEEEKNEEGANQEENAENKEKRFIGTLIPLALGALTKLFKG.

An N-terminal signal peptide occupies residues M1–G22. The tract at residues E23–N45 is disordered. Positions E23–E47 are excised as a propeptide. A compositionally biased stretch (acidic residues) spans K26–N42. K67 bears the Lysine amide mark.

In terms of tissue distribution, expressed by the skin glands.

The protein resides in the secreted. Its function is as follows. Antimicrobial peptide that displays antibacterial and antiprotozoal activity. Exhibits antibacterial activity against the Gram-positive bacteria S.epidermidis ATCC 12228 (MIC=2 uM), E.casseliflavus ATCC 700327 (MIC=16 uM), S.aureus ATCC 25923 (MIC=4 uM) and E.faecalis ATCC 29212 (MIC=8 uM), and the Gram-negative bacteria E.coli ATCC 25922 (MIC=16 uM) and K.pneumoniae ATCC 13883 (MIC=4 uM). Displays antiprotozoal activity against the epimastigote form of T.cruzi (IC(50)=15.9 uM). Does not show antimicrobial activity against the Gram-negative bacterium P.aeruginosa ATCC 27853, or the fungi C.albicans ATCC 90028 and C.parapsilosis ATCC 22019. Shows high cytolytic activity against human erythrocytes (HC(50)=10 uM), and displays anti-proliferative effects against various cancer cell lines including MCF-7 breast cancer cells (IC(50)=13.7 uM), HeLa cervical adenocarcinoma cells (IC(50)=11.1 uM) and B16F10 murine melanoma cells (IC(50)=10.5 uM). This Boana raniceps (Chaco tree frog) protein is Figainin 1.